A 120-amino-acid polypeptide reads, in one-letter code: Large ribosomal subunit protein uL22 (120 aa).

The disordered stretch occupies residues 1-20 (MFVNRRYTARGKNLPSSPKK).

It belongs to the universal ribosomal protein uL22 family. In terms of assembly, part of the 50S ribosomal subunit.

This protein binds specifically to 23S rRNA; its binding is stimulated by other ribosomal proteins, e.g. L4, L17, and L20. It is important during the early stages of 50S assembly. It makes multiple contacts with different domains of the 23S rRNA in the assembled 50S subunit and ribosome. In terms of biological role, the globular domain of the protein is located near the polypeptide exit tunnel on the outside of the subunit, while an extended beta-hairpin is found that lines the wall of the exit tunnel in the center of the 70S ribosome. The chain is Large ribosomal subunit protein uL22 from Borrelia turicatae (strain 91E135).